Here is a 611-residue protein sequence, read N- to C-terminus: Elongation factor 4 (611 aa).

Residues 11-193 enclose the tr-type G domain; it reads EKIRNFSIIA…QVVEYVPAPS (183 aa). GTP is bound by residues 23-28 and 140-143; these read DHGKST and NKID.

The protein belongs to the TRAFAC class translation factor GTPase superfamily. Classic translation factor GTPase family. LepA subfamily.

It is found in the cell membrane. It carries out the reaction GTP + H2O = GDP + phosphate + H(+). Functionally, required for accurate and efficient protein synthesis under certain stress conditions. May act as a fidelity factor of the translation reaction, by catalyzing a one-codon backward translocation of tRNAs on improperly translocated ribosomes. Back-translocation proceeds from a post-translocation (POST) complex to a pre-translocation (PRE) complex, thus giving elongation factor G a second chance to translocate the tRNAs correctly. Binds to ribosomes in a GTP-dependent manner. The protein is Elongation factor 4 of Enterococcus faecalis (strain ATCC 700802 / V583).